A 498-amino-acid chain; its full sequence is Na(+)/H(+) exchange regulatory cofactor NHE-RF4 (498 aa).

4 PDZ domains span residues 49–130 (FCLL…LAQH), 157–235 (LCHV…AGLE), 263–346 (CLNI…VDPE), and 394–475 (QCFL…GARN). Residue Ser329 is modified to Phosphoserine.

Interacts with the C-terminal region of GUCY2C. Interacts with C-terminal region of SLC9A3 and the interactions decrease in response to elevated calcium ion levels. Interacts with the C-terminal region of SLC34A1. Interacts with USP2 isoform 2. Interacts (via the third PDZ domain) with SLC26A3 (via PDZ-binding motif). This interaction leads to decreased expression of SLC26A3 on the cell membrane resulting in its reduced exchanger activity. Phosphorylation at Ser-329 negatively regulates its interaction with SLC26A3. As to expression, expressed in kidney and small intestine. Not detected in heart, brain, spleen, lung, liver, skeletal muscle or testis.

The protein localises to the cell membrane. It is found in the cytoplasm. In terms of biological role, acts as a regulatory protein that associates with GUCY2C and negatively modulates its heat-stable enterotoxin-mediated activation. Stimulates SLC9A3 activity in the presence of elevated calcium ions. The polypeptide is Na(+)/H(+) exchange regulatory cofactor NHE-RF4 (Nherf4) (Mus musculus (Mouse)).